A 267-amino-acid chain; its full sequence is MSVSQNKLCKRLRRLVGKAIDDYQMIADGDRIMVCLSGGKDSYALLDILLALQKSAPIHFEIIAVNLNQKFPNFPERVLPDYLEKLGVKYDIIEHDTYQVVMEKIPAGKTMCSLCSRLRRGILYRYAEEHGITKIALGHHKIDVIETFFLNLFFTGRLKAMPAKLLSDNKKQIVIRPLVYCDEKDIVKYAKLKAFPIIPSNLCGVQKNMQRTIIKEMLLAWEKDYPQRIEHIFAALTKTVPSHLLDTELFNFAEIEQKAIRFCEESD.

Residues 37-42 (SGGKDS) carry the PP-loop motif motif. Positions 112, 115, and 203 each coordinate [4Fe-4S] cluster.

The protein belongs to the TtcA family. Homodimer. The cofactor is Mg(2+). Requires [4Fe-4S] cluster as cofactor.

The protein resides in the cytoplasm. It carries out the reaction cytidine(32) in tRNA + S-sulfanyl-L-cysteinyl-[cysteine desulfurase] + AH2 + ATP = 2-thiocytidine(32) in tRNA + L-cysteinyl-[cysteine desulfurase] + A + AMP + diphosphate + H(+). Its pathway is tRNA modification. Catalyzes the ATP-dependent 2-thiolation of cytidine in position 32 of tRNA, to form 2-thiocytidine (s(2)C32). The sulfur atoms are provided by the cysteine/cysteine desulfurase (IscS) system. The polypeptide is tRNA-cytidine(32) 2-sulfurtransferase (Dichelobacter nodosus (strain VCS1703A)).